Here is a 275-residue protein sequence, read N- to C-terminus: AA9 family lytic polysaccharide monooxygenase D (275 aa).

The N-terminal stretch at 1 to 17 (MKLSLLAIAAIAPFVSA) is a signal peptide. Positions 18 and 101 each coordinate Cu(2+). Residues cysteine 67 and cysteine 189 are joined by a disulfide bond. Histidine 176 is an O2 binding site. Tyrosine 186 lines the Cu(2+) pocket. An N-linked (GlcNAc...) asparagine glycan is attached at asparagine 220.

Belongs to the polysaccharide monooxygenase AA9 family. Cu(2+) is required as a cofactor.

The protein resides in the secreted. The enzyme catalyses [(1-&gt;4)-beta-D-glucosyl]n+m + reduced acceptor + O2 = 4-dehydro-beta-D-glucosyl-[(1-&gt;4)-beta-D-glucosyl]n-1 + [(1-&gt;4)-beta-D-glucosyl]m + acceptor + H2O.. Functionally, lytic polysaccharide monooxygenase (LPMO) that depolymerizes crystalline and amorphous polysaccharides via the oxidation of scissile alpha- or beta-(1-4)-glycosidic bonds, yielding C1 or C4 oxidation products. Catalysis by LPMOs requires the reduction of the active-site copper from Cu(II) to Cu(I) by a reducing agent and H(2)O(2) or O(2) as a cosubstrate. The sequence is that of AA9 family lytic polysaccharide monooxygenase D from Aspergillus tamarii.